Reading from the N-terminus, the 331-residue chain is Cathepsin S (331 aa).

A signal peptide spans 1-16 (MKRLVCVLLVCSSAVA). The propeptide at 17–114 (QLHKDPTLDH…ITYKSNPNRI (98 aa)) is activation peptide. The N-linked (GlcNAc...) asparagine glycan is linked to Asn104. Cystine bridges form between Cys126-Cys224, Cys136-Cys180, Cys170-Cys213, and Cys272-Cys320. Cys139 is a catalytic residue. Residues His278 and Asn298 contribute to the active site.

This sequence belongs to the peptidase C1 family. In terms of assembly, monomer.

It is found in the lysosome. The protein localises to the secreted. The protein resides in the cytoplasmic vesicle. It localises to the phagosome. The enzyme catalyses Similar to cathepsin L, but with much less activity on Z-Phe-Arg-|-NHMec, and more activity on the Z-Val-Val-Arg-|-Xaa compound.. Thiol protease. Key protease responsible for the removal of the invariant chain from MHC class II molecules and MHC class II antigen presentation. The bond-specificity of this proteinase is in part similar to the specificities of cathepsin L. In Homo sapiens (Human), this protein is Cathepsin S (CTSS).